The sequence spans 378 residues: Putative dioxygenase VC_1345 (378 aa).

Fe cation-binding residues include H288, D294, and H324.

The protein belongs to the homogentisate dioxygenase family. Requires Fe cation as cofactor.

This Vibrio cholerae serotype O1 (strain ATCC 39315 / El Tor Inaba N16961) protein is Putative dioxygenase VC_1345.